The sequence spans 816 residues: Mechanosensitive cation channel TMEM63B (816 aa).

The Extracellular segment spans residues 1–46 (MLPYVIATLGSAGSTCKASTCSNSTKDYCYSARIRSTVLQGLPFGG). Residues 47-71 (VPTVLALDFMCFLALLFVFSILRKV) form a helical membrane-spanning segment. Residues cysteine 57 and cysteine 119 are each lipidated (S-palmitoyl cysteine). The Cytoplasmic portion of the chain corresponds to 72–138 (AWDYGRLALV…KDDEIRDKCG (67 aa)). Residues 139 to 171 (GDAVHYLSFQRHIIGLLVAVGVLSVGIVLPVNF) traverse the membrane as a helical segment. Topologically, residues 172-195 (SGDLLENNAYSFGRTTIANLNSGN) are extracellular. Residues 196–220 (NLLWLHTSFAFLYLLLTVYSMRRHT) form a helical membrane-spanning segment. The Cytoplasmic portion of the chain corresponds to 221 to 420 (SKMRYKEDDL…IYWEHLSIRG (200 aa)). The intracellular linker IL2; confers mechanosensitivity stretch occupies residues 224-419 (RYKEDDLVKR…NIYWEHLSIR (196 aa)). Residues cysteine 375 and cysteine 391 are each lipidated (S-palmitoyl cysteine). A helical membrane pass occupies residues 421–450 (FIWWIRCLVINVVLFILLFFLTTPAIIITT). Residues 451 to 465 (MDKFNVTKPVEYLNN) are Extracellular-facing. Residues 466-495 (PIITQFFPTLLLWCFSALLPTIVYYSAFFE) traverse the membrane as a helical segment. Topologically, residues 496–499 (AHWT) are cytoplasmic. The chain crosses the membrane as a helical span at residues 500-536 (RSGENRTTMHKCYTFLIFMVLLLPSLGLSSLDVFFRW). Topologically, residues 537–559 (LFDKKFLAEAAVRFECVFLPDNG) are extracellular. A helical transmembrane segment spans residues 560 to 592 (AFFVNYVIASAFIGNAMDLLRIPGLLMYMIRLC). The interval 560–592 (AFFVNYVIASAFIGNAMDLLRIPGLLMYMIRLC) is gating helix. At 593–612 (LARSAAERRNVKRHQAYEFQ) the chain is on the cytoplasmic side. The chain crosses the membrane as a helical span at residues 613 to 631 (FGAAYAWMMCVFTVVMTYS). Residues 632 to 634 (ITC) are Extracellular-facing. Residues 635 to 659 (PIIVPFGLMYMLLKHLVDRYNLYYA) form a helical membrane-spanning segment. At 660–666 (YLPAKLD) the chain is on the cytoplasmic side. A helical membrane pass occupies residues 667-695 (KKIHSGAVNQVVAAPILCLFWLLFFSTMR). The Extracellular segment spans residues 696–700 (TGFLA). Residues 701-721 (PTSMFTFVVLVITIVICLCHV) form a helical membrane-spanning segment. S-palmitoyl cysteine attachment occurs at residues cysteine 719 and cysteine 722. The Cytoplasmic portion of the chain corresponds to 722–816 (CFGHFKYLSA…DSLIENEIRQ (95 aa)).

Belongs to the CSC1 (TC 1.A.17) family. Monomer. In terms of processing, palmitoylation is required for localization to the plasma membrane and stability.

The protein resides in the cell membrane. It localises to the lysosome membrane. Its subcellular location is the early endosome membrane. It carries out the reaction Ca(2+)(in) = Ca(2+)(out). It catalyses the reaction Mg(2+)(in) = Mg(2+)(out). The enzyme catalyses K(+)(in) = K(+)(out). The catalysed reaction is Na(+)(in) = Na(+)(out). It carries out the reaction Cs(+)(in) = Cs(+)(out). Its function is as follows. Mechanosensitive cation channel with low conductance and high activation threshold. Osmosensitive cation channel preferentially activated by hypotonic stress. Also acts as a phospholipid scramblase in response to changes in membrane structure: upon changes in membrane curvature and thickness, alters its conformation and translocates phospholipids, thereby controlling plasma membrane lipid distribution. The protein is Mechanosensitive cation channel TMEM63B of Gallus gallus (Chicken).